The following is a 337-amino-acid chain: Carbonic anhydrase 14 (337 aa).

A signal peptide spans Met1–Ala15. The Extracellular segment spans residues Ala16 to Met290. In terms of domain architecture, Alpha-carbonic anhydrase spans Gln20 to Phe278. Cys40 and Cys221 are disulfide-bonded. The active-site Proton donor/acceptor is His84. Zn(2+) is bound by residues His109, His111, and His135. Residue Asn213 is glycosylated (N-linked (GlcNAc...) asparagine). Thr217 to Thr218 is a substrate binding site. A helical transmembrane segment spans residues Leu291–Ile311. Over Ala312 to Ala337 the chain is Cytoplasmic. A Phosphoserine modification is found at Ser325.

Belongs to the alpha-carbonic anhydrase family. Requires Zn(2+) as cofactor. In terms of tissue distribution, high expression in all parts of the central nervous system and lower expression in adult liver, heart, small intestine, colon, kidney, urinary bladder and skeletal muscle.

The protein localises to the membrane. The catalysed reaction is hydrogencarbonate + H(+) = CO2 + H2O. Its activity is regulated as follows. Activated by histamine, L-adrenaline, L- and D-histidine, and L- and D-phenylalanine. Inhibited by coumarins, saccharin, sulfonamide derivatives such as acetazolamide (AZA) and Foscarnet (phosphonoformate trisodium salt). Reversible hydration of carbon dioxide. The polypeptide is Carbonic anhydrase 14 (CA14) (Homo sapiens (Human)).